A 265-amino-acid chain; its full sequence is Acrosomal protein SP-10 (265 aa).

Residues 1-21 form the signal peptide; that stretch reads MNRFLLLMSLYLLGSARGTSS. Positions 62–181 are disordered; the sequence is LNTLSEHGSS…EQASGAPISS (120 aa). Repeat copies occupy residues 66-70, 71-75, 85-88, 91-95, 110-114, 115-119, 120-123, 125-129, 135-139, 140-144, 145-148, 150-154, 155-159, 160-164, 165-168, and 170-174. The 3 X 5 AA repeats of S-E-H-[GA]-S stretch occupies residues 66–95; it reads SEHGSSEHGSSKHTVAEHTSGEHAESEHAS. The segment covering 69-110 has biased composition (basic and acidic residues); the sequence is GSSEHGSSKHTVAEHTSGEHAESEHASGEPAATEHAEGEHTV. Positions 85–168 are 4 X 4 AA repeats of S-G-E-H; the sequence is SGEHAESEHA…ASGEQPSGEH (84 aa). A 9 X 5 AA repeats of [SV]-G-E-Q-[PSA] region spans residues 110-174; that stretch reads VGEQPSGEQP…SGEHASGEQA (65 aa). A compositionally biased stretch (polar residues) spans 152–163; the sequence is EQPSGEQASGEQ. Asn258 carries N-linked (GlcNAc...) asparagine glycosylation.

Testis.

The protein localises to the cytoplasmic vesicle. The protein resides in the secretory vesicle. Its subcellular location is the acrosome. The sequence is that of Acrosomal protein SP-10 (ACRV1) from Homo sapiens (Human).